The chain runs to 72 residues: Kappa-conotoxin PVIIA (72 aa).

A signal peptide spans 1 to 22 (MKLTCVVIVVVLFLTACQLITA). A propeptide spanning residues 23 to 45 (DDSRRTQKHRALRSTTKLSLSTR) is cleaved from the precursor. 3 cysteine pairs are disulfide-bonded: C46–C61, C53–C65, and C60–C71. P49 carries the 4-hydroxyproline modification.

The protein belongs to the conotoxin O1 superfamily. This toxin is not amidated at the C-terminal Val residue. As to expression, expressed by the venom duct.

The protein localises to the secreted. Functionally, kappa-conotoxins bind and inhibit voltage-gated potassium channels (Kv). This toxin inhibits the drosophila Shaker channel (IC(50)=57-80 nM). In vivo, when tested in fish, this toxin induces hyperactivity, followed by continuous contraction and extension of major fins, without immobilization or death. Injection of this peptide together with the delta-conotoxin PVIA causes the sudden tetanus of prey (STOP) syndrome, which is a single, lethal 'fin-pop' in envenomed fish. When tested in mice, induces hyperactivity. The sequence is that of Kappa-conotoxin PVIIA from Conus purpurascens (Purple cone).